A 278-amino-acid chain; its full sequence is Protein FixR (278 aa).

An NAD(+)-binding site is contributed by 40 to 64 (LLTGASRGIGHATAKLFSEAGWRII). Residue serine 175 coordinates substrate. Tyrosine 189 acts as the Proton acceptor in catalysis.

Belongs to the short-chain dehydrogenases/reductases (SDR) family.

In Bradyrhizobium diazoefficiens (strain JCM 10833 / BCRC 13528 / IAM 13628 / NBRC 14792 / USDA 110), this protein is Protein FixR (fixR).